Here is a 223-residue protein sequence, read N- to C-terminus: DNA mismatch repair protein MutH (223 aa).

This sequence belongs to the MutH family.

The protein localises to the cytoplasm. Sequence-specific endonuclease that cleaves unmethylated GATC sequences. It is involved in DNA mismatch repair. In Haemophilus influenzae (strain PittEE), this protein is DNA mismatch repair protein MutH.